The following is a 142-amino-acid chain: Hemoglobin subunit beta-C (142 aa).

In terms of domain architecture, Globin spans 2 to 142; that stretch reads PNKALITGFW…VASALAHRYH (141 aa). Heme b-binding residues include H59 and H88.

The protein belongs to the globin family. As to quaternary structure, heterotetramer of two alpha chains and two beta chains. Red blood cells.

Functionally, involved in oxygen transport from the lung to the various peripheral tissues. This chain is Hemoglobin subunit beta-C (HBBC), found in Ovis aries (Sheep).